A 302-amino-acid polypeptide reads, in one-letter code: N-acetylmuramic acid 6-phosphate etherase (302 aa).

In terms of domain architecture, SIS spans 55 to 218; sequence AYPKFDQGGR…STGIMVKSGK (164 aa). The Proton donor role is filled by glutamate 83. Glutamate 114 is a catalytic residue.

Belongs to the GCKR-like family. MurNAc-6-P etherase subfamily. In terms of assembly, homodimer.

The enzyme catalyses N-acetyl-D-muramate 6-phosphate + H2O = N-acetyl-D-glucosamine 6-phosphate + (R)-lactate. The protein operates within amino-sugar metabolism; N-acetylmuramate degradation. Functionally, specifically catalyzes the cleavage of the D-lactyl ether substituent of MurNAc 6-phosphate, producing GlcNAc 6-phosphate and D-lactate. The sequence is that of N-acetylmuramic acid 6-phosphate etherase from Levilactobacillus brevis (strain ATCC 367 / BCRC 12310 / CIP 105137 / JCM 1170 / LMG 11437 / NCIMB 947 / NCTC 947) (Lactobacillus brevis).